The sequence spans 77 residues: Bradykinin-potentiating peptide (77 aa).

The N-terminal stretch at 1 to 22 is a signal peptide; sequence MNKKTLLVIFIVTLLIADEVNS. Positions 74–77 are excised as a propeptide; sequence RRRR.

The protein belongs to the non-disulfide-bridged peptide (NDBP) superfamily. Long chain multifunctional peptide (group 2) family. In terms of tissue distribution, expressed by the venom gland.

The protein resides in the secreted. Antimicrobial peptide. May also inhibit angiotensin-converting enzyme (ACE) and potentiate bradykinin (BK). The sequence is that of Bradykinin-potentiating peptide from Tityus discrepans (Venezuelan scorpion).